A 270-amino-acid polypeptide reads, in one-letter code: Glutamate racemase (270 aa).

Substrate is bound by residues 7–8 (DS) and 39–40 (YG). C70 serves as the catalytic Proton donor/acceptor. 71–72 (NT) is a binding site for substrate. Catalysis depends on C194, which acts as the Proton donor/acceptor. Residue 195–196 (TH) participates in substrate binding.

Belongs to the aspartate/glutamate racemases family.

It catalyses the reaction L-glutamate = D-glutamate. The protein operates within cell wall biogenesis; peptidoglycan biosynthesis. Its function is as follows. Provides the (R)-glutamate required for cell wall biosynthesis. The sequence is that of Glutamate racemase from Jannaschia sp. (strain CCS1).